A 320-amino-acid chain; its full sequence is Histidine decarboxylase proenzyme (320 aa).

A propeptide spanning residues 2 to 11 is cleaved from the precursor; the sequence is NKNLEANRNR. Ser-98 carries the pyruvic acid (Ser) modification. Glu-215 acts as the Proton donor in catalysis.

The proenzyme is a hexamer of identical pi chains; each pi chain monomer is cleaved to form a small (or beta) chain and a large (or alpha) chain by non-hydrolytic self-catalysis. Requires pyruvate as cofactor.

The catalysed reaction is L-histidine + H(+) = histamine + CO2. The protein is Histidine decarboxylase proenzyme (hdc) of Clostridium perfringens (strain 13 / Type A).